A 415-amino-acid polypeptide reads, in one-letter code: Serine--tRNA ligase (415 aa).

230–232 (TAE) provides a ligand contact to L-serine. An ATP-binding site is contributed by 261–263 (RKE). An L-serine-binding site is contributed by E284. 348–351 (EISS) is an ATP binding site. S382 lines the L-serine pocket.

The protein belongs to the class-II aminoacyl-tRNA synthetase family. Type-1 seryl-tRNA synthetase subfamily. As to quaternary structure, homodimer. The tRNA molecule binds across the dimer.

The protein resides in the cytoplasm. It carries out the reaction tRNA(Ser) + L-serine + ATP = L-seryl-tRNA(Ser) + AMP + diphosphate + H(+). The enzyme catalyses tRNA(Sec) + L-serine + ATP = L-seryl-tRNA(Sec) + AMP + diphosphate + H(+). It participates in aminoacyl-tRNA biosynthesis; selenocysteinyl-tRNA(Sec) biosynthesis; L-seryl-tRNA(Sec) from L-serine and tRNA(Sec): step 1/1. In terms of biological role, catalyzes the attachment of serine to tRNA(Ser). Is also able to aminoacylate tRNA(Sec) with serine, to form the misacylated tRNA L-seryl-tRNA(Sec), which will be further converted into selenocysteinyl-tRNA(Sec). This is Serine--tRNA ligase from Sulfurimonas denitrificans (strain ATCC 33889 / DSM 1251) (Thiomicrospira denitrificans (strain ATCC 33889 / DSM 1251)).